The sequence spans 471 residues: 3-isopropylmalate dehydratase large subunit (471 aa).

Residues Cys349, Cys410, and Cys413 each coordinate [4Fe-4S] cluster.

Belongs to the aconitase/IPM isomerase family. LeuC type 1 subfamily. In terms of assembly, heterodimer of LeuC and LeuD. [4Fe-4S] cluster is required as a cofactor.

The enzyme catalyses (2R,3S)-3-isopropylmalate = (2S)-2-isopropylmalate. The protein operates within amino-acid biosynthesis; L-leucine biosynthesis; L-leucine from 3-methyl-2-oxobutanoate: step 2/4. Catalyzes the isomerization between 2-isopropylmalate and 3-isopropylmalate, via the formation of 2-isopropylmaleate. This chain is 3-isopropylmalate dehydratase large subunit, found in Chromobacterium violaceum (strain ATCC 12472 / DSM 30191 / JCM 1249 / CCUG 213 / NBRC 12614 / NCIMB 9131 / NCTC 9757 / MK).